A 258-amino-acid polypeptide reads, in one-letter code: Alpha-fibrinogenase albofibrase (258 aa).

Positions 1 to 18 are cleaved as a signal peptide; the sequence is MVLIRVLANLLILQLSYA. The propeptide occupies 19 to 24; the sequence is QKSSEL. Residues 25–249 form the Peptidase S1 domain; it reads VVGGDECNIN…YNDWIQSIIA (225 aa). Intrachain disulfides connect Cys-31/Cys-163, Cys-50/Cys-66, Cys-98/Cys-256, Cys-142/Cys-210, Cys-174/Cys-189, and Cys-200/Cys-225. N-linked (GlcNAc...) asparagine glycosylation is present at Asn-44. Residues His-65 and Asp-110 each act as charge relay system in the active site. Residue Ser-204 is the Charge relay system of the active site.

The protein belongs to the peptidase S1 family. Snake venom subfamily. In terms of assembly, monomer. Expressed by the venom gland.

It localises to the secreted. Its function is as follows. The recombinant protein has fibrinogenolytic activity against the Aalpha chain (FGA) of fibrinogen. Activates plasminogen (PLG) (is 4-fold less active than urokinase). Has weak thrombin-like enzyme activity. Has enzymatic activity against a trypsin-like substrate (S-3013) and shows a weaker activity on an activated protein C substrate (S-3125). In Trimeresurus albolabris (White-lipped pit viper), this protein is Alpha-fibrinogenase albofibrase.